The chain runs to 543 residues: Chaperonin GroEL (543 aa).

Residues 29–32 (TLGP), 86–90 (DGTTT), Gly413, 476–478 (NAA), and Asp492 each bind ATP.

It belongs to the chaperonin (HSP60) family. As to quaternary structure, forms a cylinder of 14 subunits composed of two heptameric rings stacked back-to-back. Interacts with the co-chaperonin GroES.

The protein localises to the cytoplasm. It carries out the reaction ATP + H2O + a folded polypeptide = ADP + phosphate + an unfolded polypeptide.. In terms of biological role, together with its co-chaperonin GroES, plays an essential role in assisting protein folding. The GroEL-GroES system forms a nano-cage that allows encapsulation of the non-native substrate proteins and provides a physical environment optimized to promote and accelerate protein folding. The sequence is that of Chaperonin GroEL from Streptococcus pyogenes serotype M3 (strain SSI-1).